Reading from the N-terminus, the 95-residue chain is UPF0235 protein Pcar_0617 (95 aa).

The protein belongs to the UPF0235 family.

The protein is UPF0235 protein Pcar_0617 of Syntrophotalea carbinolica (strain DSM 2380 / NBRC 103641 / GraBd1) (Pelobacter carbinolicus).